Consider the following 644-residue polypeptide: Exoribonuclease 2 (644 aa).

Residues R189–K516 form the RNB domain. An S1 motif domain is found at D561 to A643.

It belongs to the RNR ribonuclease family. RNase II subfamily.

It is found in the cytoplasm. It carries out the reaction Exonucleolytic cleavage in the 3'- to 5'-direction to yield nucleoside 5'-phosphates.. Its function is as follows. Involved in mRNA degradation. Hydrolyzes single-stranded polyribonucleotides processively in the 3' to 5' direction. This is Exoribonuclease 2 from Salmonella arizonae (strain ATCC BAA-731 / CDC346-86 / RSK2980).